Reading from the N-terminus, the 65-residue chain is UPF0434 protein BQ10150 (65 aa).

It belongs to the UPF0434 family.

The chain is UPF0434 protein BQ10150 from Bartonella quintana (strain Toulouse) (Rochalimaea quintana).